The following is a 215-amino-acid chain: Vacuolar ATPase assembly integral membrane protein VPH2 (215 aa).

Residues 1–134 lie on the Cytoplasmic side of the membrane; it reads MFEIKLNDRI…SQINKQIKEQ (134 aa). Residues 135 to 155 traverse the membrane as a helical segment; the sequence is VTTVFNVLVSVISVVVAIWYW. Over 156–167 the chain is Lumenal; that stretch reads TGSSTNFPVHVR. Residues 168-186 traverse the membrane as a helical segment; it reads LLLCLFFGILVLVADVVVY. Topologically, residues 187 to 215 are cytoplasmic; it reads NSYLKKLEEAKVKEKTKVEKKKVLSKITL.

The protein localises to the endoplasmic reticulum membrane. Functionally, required for vacuolar ATPase assembly. The sequence is that of Vacuolar ATPase assembly integral membrane protein VPH2 (VPH2) from Saccharomyces cerevisiae (strain ATCC 204508 / S288c) (Baker's yeast).